Reading from the N-terminus, the 145-residue chain is RNA polymerase-binding transcription factor DksA (145 aa).

C108, C111, C129, and C132 together coordinate Zn(2+). The dksA C4-type zinc-finger motif lies at 108 to 132; it reads CDCCGEEIGIRRLEARPTADLCIDC.

The protein belongs to the DksA family. Interacts directly with the RNA polymerase.

The protein resides in the cytoplasm. Its function is as follows. Transcription factor that acts by binding directly to the RNA polymerase (RNAP). Required for negative regulation of rRNA expression and positive regulation of several amino acid biosynthesis promoters. Also required for regulation of fis expression. This Haemophilus influenzae (strain ATCC 51907 / DSM 11121 / KW20 / Rd) protein is RNA polymerase-binding transcription factor DksA.